A 96-amino-acid polypeptide reads, in one-letter code: Aspartyl/glutamyl-tRNA(Asn/Gln) amidotransferase subunit C (96 aa).

It belongs to the GatC family. As to quaternary structure, heterotrimer of A, B and C subunits.

The enzyme catalyses L-glutamyl-tRNA(Gln) + L-glutamine + ATP + H2O = L-glutaminyl-tRNA(Gln) + L-glutamate + ADP + phosphate + H(+). It carries out the reaction L-aspartyl-tRNA(Asn) + L-glutamine + ATP + H2O = L-asparaginyl-tRNA(Asn) + L-glutamate + ADP + phosphate + 2 H(+). Allows the formation of correctly charged Asn-tRNA(Asn) or Gln-tRNA(Gln) through the transamidation of misacylated Asp-tRNA(Asn) or Glu-tRNA(Gln) in organisms which lack either or both of asparaginyl-tRNA or glutaminyl-tRNA synthetases. The reaction takes place in the presence of glutamine and ATP through an activated phospho-Asp-tRNA(Asn) or phospho-Glu-tRNA(Gln). This chain is Aspartyl/glutamyl-tRNA(Asn/Gln) amidotransferase subunit C, found in Symbiobacterium thermophilum (strain DSM 24528 / JCM 14929 / IAM 14863 / T).